Consider the following 122-residue polypeptide: Large ribosomal subunit protein eL34 (122 aa).

It belongs to the eukaryotic ribosomal protein eL34 family.

In Dictyostelium discoideum (Social amoeba), this protein is Large ribosomal subunit protein eL34 (rpl34).